The primary structure comprises 157 residues: S-ribosylhomocysteine lyase (157 aa).

Fe cation-binding residues include H54, H58, and C124.

This sequence belongs to the LuxS family. As to quaternary structure, homodimer. The cofactor is Fe cation.

It catalyses the reaction S-(5-deoxy-D-ribos-5-yl)-L-homocysteine = (S)-4,5-dihydroxypentane-2,3-dione + L-homocysteine. In terms of biological role, involved in the synthesis of autoinducer 2 (AI-2) which is secreted by bacteria and is used to communicate both the cell density and the metabolic potential of the environment. The regulation of gene expression in response to changes in cell density is called quorum sensing. Catalyzes the transformation of S-ribosylhomocysteine (RHC) to homocysteine (HC) and 4,5-dihydroxy-2,3-pentadione (DPD). This chain is S-ribosylhomocysteine lyase, found in Oenococcus oeni (strain ATCC BAA-331 / PSU-1).